A 131-amino-acid chain; its full sequence is Small ribosomal subunit protein uS8 (131 aa).

This sequence belongs to the universal ribosomal protein uS8 family. Part of the 30S ribosomal subunit. Contacts proteins S5 and S12.

In terms of biological role, one of the primary rRNA binding proteins, it binds directly to 16S rRNA central domain where it helps coordinate assembly of the platform of the 30S subunit. The sequence is that of Small ribosomal subunit protein uS8 from Finegoldia magna (strain ATCC 29328 / DSM 20472 / WAL 2508) (Peptostreptococcus magnus).